The primary structure comprises 237 residues: Ribonuclease 3 (237 aa).

An RNase III domain is found at Ser-3–Gly-133. Mg(2+) is bound at residue Glu-43. Residue Asp-47 is part of the active site. Asp-119 and Glu-122 together coordinate Mg(2+). The active site involves Glu-122. Residues Asp-160–Val-228 form the DRBM domain.

The protein belongs to the ribonuclease III family. Homodimer. Mg(2+) serves as cofactor.

The protein localises to the cytoplasm. The catalysed reaction is Endonucleolytic cleavage to 5'-phosphomonoester.. Functionally, digests double-stranded RNA. Involved in the processing of primary rRNA transcript to yield the immediate precursors to the large and small rRNAs (23S and 16S). Processes some mRNAs, and tRNAs when they are encoded in the rRNA operon. Processes pre-crRNA and tracrRNA of type II CRISPR loci if present in the organism. This is Ribonuclease 3 from Mycolicibacterium paratuberculosis (strain ATCC BAA-968 / K-10) (Mycobacterium paratuberculosis).